The chain runs to 129 residues: Snaclec coagulation factor IX/factor X-binding protein subunit B3 (129 aa).

Positions L1–A8 are cleaved as a signal peptide. Cystine bridges form between C10/C21, C38/C127, and C104/C119. The 112-residue stretch at Y17–E128 folds into the C-type lectin domain.

This sequence belongs to the snaclec family. Heterodimer of subunits A and B3; disulfide-linked. As to expression, expressed by the venom gland.

It is found in the secreted. Functionally, anticoagulant protein which binds to the gamma-carboxyglutamic acid-domain regions of factors IX (F9) and factor X (F10) in the presence of calcium with a 1 to 1 stoichiometry. This Trimeresurus stejnegeri (Chinese green tree viper) protein is Snaclec coagulation factor IX/factor X-binding protein subunit B3.